Here is a 68-residue protein sequence, read N- to C-terminus: Erythrodihydroneopterin triphosphate synthetase (68 aa).

At Ser66 the chain carries Phosphoserine.

This Cavia porcellus (Guinea pig) protein is Erythrodihydroneopterin triphosphate synthetase.